Reading from the N-terminus, the 440-residue chain is Polycomb group protein VERNALIZATION 2 (440 aa).

A C2H2-type zinc finger spans residues 86 to 111; it reads EDCSCPFCSMLCGSFKGLQFHLNSSH. Positions 156–163 match the Nuclear localization signal motif; sequence KPRKRRQR. The VEFS-box stretch occupies residues 267–345; the sequence is RQFYHSHRVQ…GHISWACEVF (79 aa). The tract at residues 398–440 is disordered; it reads NNNNNSVDHPSDSNTNNNNIVDHPNDIKNKNNVDNKDNNSRDK. The span at 420–440 shows a compositional bias: basic and acidic residues; sequence HPNDIKNKNNVDNKDNNSRDK.

Belongs to the VEFS (VRN2-EMF2-FIS2-SU(Z)12) family. Probable component of a PcG complex. In plants, PcG complexes are probably composed of a member of the EZ family (CLF or MEA), FIE, and a member of the VEFS family (FIS2, VRN2 or EMF2). Component of the plant homeodomain / polycomb repressive complex 2 (PHD-PRC2) large complex during prolonged cold, composed of core PRC2 components (VRN2, EZA1, FIE and MSI1), and three related PHD finger proteins (VIL1, VIL2 and VIN3) that mediates histone H3 trimethylation on 'Lys-27' (H3K27me3). Binds to ALP1. As to expression, weakly expressed. Expressed both during, and in the absence of vernalization.

The protein localises to the nucleus. Its function is as follows. Polycomb group (PcG) protein. Plays a central role in vernalization by maintaining repressed the homeotic gene FLC, a floral repressor, after a cold treatment. PcG proteins act by forming multiprotein complexes, which are required to maintain the transcriptionally repressive state of homeotic genes throughout development. PcG proteins are not required to initiate repression, but to maintain it during later stages of development. They probably act via the methylation of histones, rendering chromatin heritably changed in its expressibility. Associates constitutively along the whole FLC locus. This Arabidopsis thaliana (Mouse-ear cress) protein is Polycomb group protein VERNALIZATION 2 (VRN2).